Here is a 1165-residue protein sequence, read N- to C-terminus: Disease resistance protein RPS4B (1165 aa).

In terms of domain architecture, TIR spans 12–174 (PQHQVFINFR…EIVKEVKKVL (163 aa)). The active site involves Glu86. Residues 211–474 (KQRLKELEEK…FLDIACFRSQ (264 aa)) form the NB-ARC domain. One copy of the LRR 1 repeat lies at 592 to 613 (SHCPHECLTNNKINMPDGLELP). The LRR 2; degenerate repeat unit spans residues 614 to 635 (LKEVRCLHWLKFPLEELPNDFD). LRR repeat units lie at residues 636 to 659 (PINL…VKDT), 684 to 703 (NLQR…RDVN), 704 to 725 (LTSL…PLIP), 726 to 748 (ENLK…VGNL), 772 to 794 (LKTL…EINK), and 795 to 818 (SSLK…SVQY). Residues 819–836 (LCLSRNDHLIYLPAGINQ) form an LRR 9; degenerate repeat. The LRR 10 repeat unit spans residues 837–863 (VSQLTRLDLKYCTKLTYVPELPPTLQY).

This sequence belongs to the disease resistance TIR-NB-LRR family. Interacts with RRS1B. RPS4B-RRS1B heterodimer interacts with the bacterial effectors AvrRps4 and PopP2.

The protein resides in the nucleus. It catalyses the reaction NAD(+) + H2O = ADP-D-ribose + nicotinamide + H(+). Disease resistance (R) protein that specifically recognizes the AvrRps4 type III effector avirulence protein from P.syringae. Heterodimerization with RRS1B is required to form a functional complex to recognize AvrRps4 and to mediate the hypersensitive response. The polypeptide is Disease resistance protein RPS4B (Arabidopsis thaliana (Mouse-ear cress)).